Reading from the N-terminus, the 588-residue chain is Probable urocanate hydratase (588 aa).

Residues 1-15 (MDTPSAAAETSEPSA) are compositionally biased toward low complexity. The interval 1–22 (MDTPSAAAETSEPSAQWQAYRG) is disordered. NAD(+)-binding positions include 62 to 63 (GG), Q140, 188 to 190 (GMG), E208, R213, 254 to 255 (NA), 275 to 279 (QTSAH), and Y334. C431 is a catalytic residue. G520 is a binding site for NAD(+).

The protein belongs to the urocanase family. NAD(+) is required as a cofactor.

It localises to the cytoplasm. The catalysed reaction is 4-imidazolone-5-propanoate = trans-urocanate + H2O. It functions in the pathway amino-acid degradation; L-histidine degradation into L-glutamate; N-formimidoyl-L-glutamate from L-histidine: step 2/3. Catalyzes the conversion of urocanate to 4-imidazolone-5-propionate. The chain is Probable urocanate hydratase from Halobacterium salinarum (strain ATCC 29341 / DSM 671 / R1).